Here is a 514-residue protein sequence, read N- to C-terminus: Ras-GEF domain-containing family member 1B-A (514 aa).

The 131-residue stretch at 76–206 (HDNNLISGSL…MTQTLIRKLT (131 aa)) folds into the N-terminal Ras-GEF domain. Positions 246–494 (DPFTLAQQLT…YLASYESEGP (249 aa)) constitute a Ras-GEF domain.

As to expression, detected in oocytes, and in embryos at 4 to 120 hours post-fertilization (hpf). Detected along marginal blastomeres at early epiboly stage and throughout the margin at the onset of gastrulation. At 60% epiboly, strongest expression is found in the dorsal shield region and is restricted to the epiblast. Detected in the anterior border of the presomitic mesoderm at the end of epiboly. Detected in adaxial cells, in the somites and in the nervous system during somitogenesis. Detected in diencephalon and hindbrain and in cells surrounding the notochord, including adaxial cells and ventral mesendoderm, in 15-somite stage embryos. At 48 hpf, detected mainly in the brain.

Its function is as follows. Guanine nucleotide exchange factor (GEF) for Ras family proteins (in vitro). The protein is Ras-GEF domain-containing family member 1B-A (rasgef1ba) of Danio rerio (Zebrafish).